The chain runs to 500 residues: Metacaspase-5 (500 aa).

Residues 1-18 (MDAALALLFGQVATAVLP) form the signal peptide. Positions 19–63 (YVVNSIGRVPRPKRVDVKKAMGEAHQCRPVVPYRAPRPYTEGRVK) are important for catalytic activity. N-linked (GlcNAc...) asparagine glycosylation is found at N70 and N113. The active site involves H147. Ca(2+)-binding residues include D162, D178, and D179. C202 is a catalytic residue. D209 is a binding site for Ca(2+). N219, N235, N258, N264, N283, and N332 each carry an N-linked (GlcNAc...) asparagine glycan. 2 disordered regions span residues 358–419 (EATL…QAYY) and 444–500 (QPPQ…PGRK). Residues 379–389 (ASTSNGKSNPG) show a composition bias toward polar residues. Residues 444–461 (QPPQQAYYQPPQQAYYQP) show a composition bias toward low complexity.

The protein belongs to the peptidase C14B family.

The protein localises to the recycling endosome. In terms of biological role, cysteine protease that cleaves specifically after arginine or lysine residues. The protein is Metacaspase-5 of Trypanosoma brucei brucei.